Consider the following 146-residue polypeptide: Putative nickel-responsive regulator 1 (146 aa).

Residues histidine 81, histidine 92, tyrosine 94, and cysteine 100 each contribute to the Ni(2+) site.

This sequence belongs to the transcriptional regulatory CopG/NikR family. Ni(2+) is required as a cofactor.

Transcriptional regulator. In Methanosarcina mazei (strain ATCC BAA-159 / DSM 3647 / Goe1 / Go1 / JCM 11833 / OCM 88) (Methanosarcina frisia), this protein is Putative nickel-responsive regulator 1.